The chain runs to 188 residues: dCTP deaminase (188 aa).

DCTP-binding positions include 111 to 116 (KSTYAR), 135 to 137 (TLE), Q156, Y170, and Q180. E137 serves as the catalytic Proton donor/acceptor.

It belongs to the dCTP deaminase family. In terms of assembly, homotrimer.

It catalyses the reaction dCTP + H2O + H(+) = dUTP + NH4(+). It functions in the pathway pyrimidine metabolism; dUMP biosynthesis; dUMP from dCTP (dUTP route): step 1/2. Its function is as follows. Catalyzes the deamination of dCTP to dUTP. In Ectopseudomonas mendocina (strain ymp) (Pseudomonas mendocina), this protein is dCTP deaminase.